Here is a 297-residue protein sequence, read N- to C-terminus: NAC domain-containing protein 72 (297 aa).

Residues 14–162 (LPPGFRFYPT…DWVLCRIYKK (149 aa)) form the NAC domain. A DNA-binding region spans residues 111-168 (VGIKKALVFYAGKAPKGTKTNWIMHEYRLIEHSRSHGSSKLDDWVLCRIYKKTSGSQR). Disordered regions lie at residues 168-195 (RQAV…SQLD) and 259-278 (GEAE…LTQS). Polar residues predominate over residues 266-277 (VNRQQNSSGLTQ).

Expressed in leaves and in root pericycle and epidermis.

It localises to the nucleus. Functionally, transcription factors that bind specifically to the 5'-CATGTG-3' motif and with bipartite regions with 5'-CGTr-3' and 5'-YACG-3' as cores. Involved in the regulation of metabolic reprogramming during senescence by promoting the chloroplast protein degradation and the catabolism of lysine, phytol and free fatty acids via the induction of CV, LKR/SDH and PES1 expression. Also triggers the degradation of starch and the accumulation of mono- and disaccharides during senescence by enhancing the expression of AMY1, SFP1 and SWEET15. The protein is NAC domain-containing protein 72 of Arabidopsis thaliana (Mouse-ear cress).